The following is a 217-amino-acid chain: GrpE protein homolog 1, mitochondrial (217 aa).

Residues 1-27 (MAARCVRLARRSLPALALSFRPSPRLL) constitute a mitochondrion transit peptide. Residue K94 is modified to N6-acetyllysine; alternate. Position 94 is an N6-succinyllysine; alternate (K94). K100 carries the post-translational modification N6-acetyllysine. At K120 the chain carries N6-succinyllysine. Position 215 is an N6-acetyllysine; alternate (K215). N6-succinyllysine; alternate is present on K215.

This sequence belongs to the GrpE family. In terms of assembly, probable component of the PAM complex at least composed of a mitochondrial HSP70 protein, GRPEL1 or GRPEL2, TIMM44, TIMM16/PAM16 and TIMM14/DNAJC19. Binds to HSP70, HSC70 and HSJ1B. In terms of tissue distribution, ubiquitous. Particularly abundant in heart, kidney and liver.

The protein localises to the mitochondrion matrix. Essential component of the PAM complex, a complex required for the translocation of transit peptide-containing proteins from the inner membrane into the mitochondrial matrix in an ATP-dependent manner. Seems to control the nucleotide-dependent binding of mitochondrial HSP70 to substrate proteins. The chain is GrpE protein homolog 1, mitochondrial (Grpel1) from Rattus norvegicus (Rat).